Consider the following 276-residue polypeptide: Elongation factor Ts (276 aa).

The involved in Mg(2+) ion dislocation from EF-Tu stretch occupies residues 81 to 84 (TDFV).

Belongs to the EF-Ts family.

The protein resides in the cytoplasm. In terms of biological role, associates with the EF-Tu.GDP complex and induces the exchange of GDP to GTP. It remains bound to the aminoacyl-tRNA.EF-Tu.GTP complex up to the GTP hydrolysis stage on the ribosome. This chain is Elongation factor Ts, found in Leifsonia xyli subsp. xyli (strain CTCB07).